A 363-amino-acid polypeptide reads, in one-letter code: Aminomethyltransferase (363 aa).

The protein belongs to the GcvT family. The glycine cleavage system is composed of four proteins: P, T, L and H.

It catalyses the reaction N(6)-[(R)-S(8)-aminomethyldihydrolipoyl]-L-lysyl-[protein] + (6S)-5,6,7,8-tetrahydrofolate = N(6)-[(R)-dihydrolipoyl]-L-lysyl-[protein] + (6R)-5,10-methylene-5,6,7,8-tetrahydrofolate + NH4(+). In terms of biological role, the glycine cleavage system catalyzes the degradation of glycine. In Nitrosomonas europaea (strain ATCC 19718 / CIP 103999 / KCTC 2705 / NBRC 14298), this protein is Aminomethyltransferase.